The following is a 621-amino-acid chain: DnaJ homolog subfamily C member 2 (621 aa).

Met-1 bears the N-acetylmethionine mark. Phosphoserine is present on residues Ser-47, Ser-49, Ser-60, and Ser-63. The region spanning 88 to 161 (DHYAVLGLGH…VKRRAFNSVD (74 aa)) is the J domain. The segment at 160–250 (VDPTFDNSVP…RDERRWIEKQ (91 aa)) is ZRF1-UBD. Ser-183 bears the Phosphoserine mark. Disordered regions lie at residues 294 to 315 (EKKA…QRQA) and 427 to 453 (EEAE…GSKN). 2 SANT domains span residues 449–511 (NGSK…KLDP) and 549–604 (TDFT…EMVK).

As to quaternary structure, component of ribosome-associated complex (RAC), a heterodimer composed of Hsp70/DnaK-type chaperone HSPA14 and Hsp40/DnaJ-type chaperone DNAJC2. Interacts (via ZRF1-UBD region) with ID1. Phosphorylated in M (mitotic) phase.

It localises to the nucleus. The protein localises to the cytoplasm. The protein resides in the cytosol. In terms of biological role, acts both as a chaperone in the cytosol and as a chromatin regulator in the nucleus. When cytosolic, acts as a molecular chaperone: component of the ribosome-associated complex (RAC), a complex involved in folding or maintaining nascent polypeptides in a folding-competent state. In the RAC complex, stimulates the ATPase activity of the ribosome-associated pool of Hsp70-type chaperones HSPA14 that bind to the nascent polypeptide chain. When nuclear, mediates the switching from polycomb-repressed genes to an active state: specifically recruited at histone H2A ubiquitinated at 'Lys-119' (H2AK119ub), and promotes the displacement of the polycomb PRC1 complex from chromatin, thereby facilitating transcription activation. In Macaca fascicularis (Crab-eating macaque), this protein is DnaJ homolog subfamily C member 2 (DNAJC2).